The primary structure comprises 180 residues: O-acetyl-ADP-ribose deacetylase (180 aa).

In terms of domain architecture, Macro spans 1-175 (MSGRINVVQG…LYQRLLGQYD (175 aa)). Substrate is bound by residues 11 to 12 (DI), N25, 33 to 35 (GVD), and 122 to 126 (STGIY). D35 (proton acceptor) is an active-site residue.

Belongs to the MacroD-type family. YmdB subfamily. Homodimer. Interacts with RNase III.

The enzyme catalyses 3''-O-acetyl-ADP-D-ribose + H2O = ADP-D-ribose + acetate + H(+). It carries out the reaction 2''-O-acetyl-ADP-D-ribose + H2O = ADP-D-ribose + acetate + H(+). Deacetylates O-acetyl-ADP ribose to yield ADP-ribose and free acetate. Down-regulates ribonuclease 3 (RNase III) activity. Acts by interacting directly with the region of the ribonuclease that is required for dimerization/activation. The sequence is that of O-acetyl-ADP-ribose deacetylase from Cronobacter sakazakii (strain ATCC BAA-894) (Enterobacter sakazakii).